Reading from the N-terminus, the 680-residue chain is Pescadillo homolog (680 aa).

A disordered region spans residues Leu-310–Asp-330. Positions Gln-351–Pro-470 constitute a BRCT domain. The disordered stretch occupies residues Ala-472–Lys-680. The stretch at Ala-496 to Lys-523 forms a coiled coil. Positions Glu-497–Ala-518 are enriched in acidic residues. Residues Asp-519–Glu-529 are compositionally biased toward basic and acidic residues. Composition is skewed to acidic residues over residues Ala-530–Val-543 and Gly-551–Glu-585. Residues Val-586–Glu-596 are compositionally biased toward basic and acidic residues. Positions Ala-613–Lys-680 form a coiled coil. The segment covering Lys-616 to Lys-628 has biased composition (basic residues). Residues Arg-629–Lys-639 show a composition bias toward basic and acidic residues.

It belongs to the pescadillo family. As to quaternary structure, component of the NOP7 complex, composed of erb1, nop7 and ytm1. The complex is held together by erb1, which interacts with nop7 via its N-terminal domain and with ytm1 via a high-affinity interaction between the seven-bladed beta-propeller domains of the 2 proteins. The NOP7 complex associates with the 66S pre-ribosome.

The protein localises to the nucleus. The protein resides in the nucleolus. It is found in the nucleoplasm. Functionally, component of the NOP7 complex, which is required for maturation of the 25S and 5.8S ribosomal RNAs and formation of the 60S ribosome. This Aspergillus clavatus (strain ATCC 1007 / CBS 513.65 / DSM 816 / NCTC 3887 / NRRL 1 / QM 1276 / 107) protein is Pescadillo homolog (nop7).